Consider the following 314-residue polypeptide: Epithelial cell adhesion molecule (314 aa).

The first 23 residues, 1–23 (MAPPQVLAFGLLLAAATAAVAAA), serve as a signal peptide directing secretion. Topologically, residues 24-265 (QQGCVCENYK…PPEFSMQGLQ (242 aa)) are extracellular. Intrachain disulfides connect Cys27-Cys46, Cys29-Cys59, Cys38-Cys48, Cys66-Cys99, Cys110-Cys116, and Cys118-Cys135. N-linked (GlcNAc...) asparagine glycosylation occurs at Asn37. Residues 63–135 (ASKCLVMKAE…RTDKDSEISC (73 aa)) form the Thyroglobulin type-1 domain. N-linked (GlcNAc...) asparagine glycosylation is present at Asn111. An N-linked (GlcNAc...) asparagine glycan is attached at Asn198. The helical transmembrane segment at 266-288 (AGIIAVIAVVAIAIVAGIIVLIV) threads the bilayer. Over 289-314 (STKKRRAKYEKAEIKEMGEMHRELNA) the chain is Cytoplasmic.

This sequence belongs to the EPCAM family. As to quaternary structure, monomer. Interacts with phosphorylated CLDN7. Post-translationally, glycosylation at Asn-198 is crucial for protein stability.

The protein resides in the lateral cell membrane. The protein localises to the cell junction. Its subcellular location is the tight junction. In terms of biological role, may act as a physical homophilic interaction molecule between intestinal epithelial cells (IECs) and intraepithelial lymphocytes (IELs) at the mucosal epithelium for providing immunological barrier as a first line of defense against mucosal infection. Plays a role in embryonic stem cells proliferation and differentiation. Up-regulates the expression of FABP5, MYC and cyclins A and E. The chain is Epithelial cell adhesion molecule (TACSTD1) from Sus scrofa (Pig).